Here is a 318-residue protein sequence, read N- to C-terminus: HTH-type transcriptional regulatory protein TyrR (318 aa).

Residues 15–239 enclose the Sigma-54 factor interaction; truncated domain; sequence FIVQSEAMKS…LYNTLYRACS (225 aa). ATP-binding positions include 43-50 and 101-110; these read GETGSGKD and ANKGTVLLDG. Positions 292–312 form a DNA-binding region, H-T-H motif; sequence STRKLAQRLGVSHTAIANKLK.

In terms of assembly, homodimer. In presence of tyrosine (or high concentrations of phenylalanine or tryptophan) and ATP, it self-associates to form a hexamer.

Its subcellular location is the cytoplasm. With respect to regulation, the DNA binding ability is drastically reduced in the presence of ATP. Tyrosine further reduces the binding affinity of TyrR in the presence of ATP. Its function is as follows. Transcriptional regulator of the TyrR regulon, which includes a number of genes coding for proteins involved in the biosynthesis or transport of the three aromatic amino acids, phenylalanine, tyrosine and tryptophan. These three aromatic amino acids act as effectors which bind to the TyrR protein to form an active regulatory protein. Acts by binding specifically to TyrR boxes in the promoter region of the target genes. Can efficiently repress the transcription of the aroF promoter, but lacks the ability to function as a transcriptional activator. The polypeptide is HTH-type transcriptional regulatory protein TyrR (Haemophilus influenzae (strain ATCC 51907 / DSM 11121 / KW20 / Rd)).